The chain runs to 327 residues: Biotin synthase (327 aa).

The 234-residue stretch at 49–282 (FNKDKIDLCS…NKVIRLCGGR (234 aa)) folds into the Radical SAM core domain. [4Fe-4S] cluster contacts are provided by C67, C71, and C74. Residues S110, C142, C201, and R277 each contribute to the [2Fe-2S] cluster site.

It belongs to the radical SAM superfamily. Biotin synthase family. Homodimer. Requires [4Fe-4S] cluster as cofactor. It depends on [2Fe-2S] cluster as a cofactor.

It carries out the reaction (4R,5S)-dethiobiotin + (sulfur carrier)-SH + 2 reduced [2Fe-2S]-[ferredoxin] + 2 S-adenosyl-L-methionine = (sulfur carrier)-H + biotin + 2 5'-deoxyadenosine + 2 L-methionine + 2 oxidized [2Fe-2S]-[ferredoxin]. The protein operates within cofactor biosynthesis; biotin biosynthesis; biotin from 7,8-diaminononanoate: step 2/2. Catalyzes the conversion of dethiobiotin (DTB) to biotin by the insertion of a sulfur atom into dethiobiotin via a radical-based mechanism. In Methanococcus maripaludis (strain C5 / ATCC BAA-1333), this protein is Biotin synthase.